Reading from the N-terminus, the 322-residue chain is Malate dehydrogenase (322 aa).

Residues Gly10 to Gly15 and Asp34 each bind NAD(+). Substrate contacts are provided by Arg83 and Arg89. NAD(+)-binding positions include Asn96 and Ile119–Asn121. 2 residues coordinate substrate: Asn121 and Arg152. Residue His176 is the Proton acceptor of the active site.

The protein belongs to the LDH/MDH superfamily. MDH type 3 family.

It catalyses the reaction (S)-malate + NAD(+) = oxaloacetate + NADH + H(+). Catalyzes the reversible oxidation of malate to oxaloacetate. The sequence is that of Malate dehydrogenase from Bradyrhizobium sp. (strain BTAi1 / ATCC BAA-1182).